The following is a 387-amino-acid chain: Probable serine/threonine-protein kinase PBL18 (387 aa).

Residues 1–37 are disordered; the sequence is MGNCLDSSARVGNRESTFGGSSRISRKPNQSSRLSSL. Gly2 is lipidated: N-myristoyl glycine. Cys4 is lipidated: S-palmitoyl cysteine. A compositionally biased stretch (polar residues) spans 14–37; sequence RESTFGGSSRISRKPNQSSRLSSL. At Thr73 the chain carries Phosphothreonine. The 282-residue stretch at 84-365 folds into the Protein kinase domain; that stretch reads FKPNSMIGEG…ADVLSTLQQL (282 aa). ATP-binding positions include 90–98 and Lys122; that span reads IGEGGFGCV. Tyr167 carries the post-translational modification Phosphotyrosine. Asp215 (proton acceptor) is an active-site residue. Ser219 carries the phosphoserine modification. 2 positions are modified to phosphothreonine: Thr250 and Thr255. Tyr263 is modified (phosphotyrosine). Positions 368–387 are disordered; sequence SSKKMGSTQNIVMSPSSHMS.

This sequence belongs to the protein kinase superfamily. Ser/Thr protein kinase family.

The protein resides in the cell membrane. It carries out the reaction L-seryl-[protein] + ATP = O-phospho-L-seryl-[protein] + ADP + H(+). It catalyses the reaction L-threonyl-[protein] + ATP = O-phospho-L-threonyl-[protein] + ADP + H(+). Its function is as follows. May be involved in plant defense signaling. In Arabidopsis thaliana (Mouse-ear cress), this protein is Probable serine/threonine-protein kinase PBL18.